The sequence spans 224 residues: Germin-like protein 8-10 (224 aa).

Residues 1–22 form the signal peptide; that stretch reads MASPSICLLAALLALVSWQAIA. An intrachain disulfide couples Cys-32 to Cys-47. Residues 62–212 form the Cupin type-1 domain; the sequence is AMLDTPRKTN…AFQVEKGTID (151 aa). An N-linked (GlcNAc...) asparagine glycan is attached at Asn-76. Mn(2+) is bound by residues His-109, His-111, and Glu-116. N-linked (GlcNAc...) asparagine glycosylation occurs at Asn-135. A Mn(2+)-binding site is contributed by His-157.

This sequence belongs to the germin family. In terms of assembly, oligomer (believed to be a pentamer but probably hexamer).

It is found in the secreted. The protein localises to the extracellular space. The protein resides in the apoplast. Plays a role in broad-spectrum disease resistance. Probably has no oxalate oxidase activity even if the active site is conserved. The sequence is that of Germin-like protein 8-10 (GLP2) from Oryza sativa subsp. japonica (Rice).